Here is a 760-residue protein sequence, read N- to C-terminus: Phosphatidylinositol N-acetylglucosaminyltransferase subunit Q (760 aa).

5 consecutive transmembrane segments (helical) span residues 278–298 (TVAS…WLHG), 349–371 (LYHI…HILW), 378–400 (CLGL…FHIY), 446–468 (LFIG…LYYL), and 475–497 (LLVV…LPLY). The disordered stretch occupies residues 696-748 (LAVGVEGPCQDEPPSPRHPLAPSAEQHPASGGLKQSLTPVPSGPGPSLPEPHG).

The protein belongs to the PIGQ family. As to quaternary structure, component of the glycosylphosphatidylinositol-N-acetylglucosaminyltransferase (GPI-GnT) complex composed at least by PIGA, PIGC, PIGH, PIGP, PIGQ, PIGY and DPM2. Interacts with PIGA, PIGH and PIGC.

The protein resides in the membrane. The protein operates within glycolipid biosynthesis; glycosylphosphatidylinositol-anchor biosynthesis. In terms of biological role, part of the glycosylphosphatidylinositol-N-acetylglucosaminyltransferase (GPI-GnT) complex that catalyzes the transfer of N-acetylglucosamine from UDP-N-acetylglucosamine to phosphatidylinositol and participates in the first step of GPI biosynthesis. This chain is Phosphatidylinositol N-acetylglucosaminyltransferase subunit Q, found in Homo sapiens (Human).